We begin with the raw amino-acid sequence, 332 residues long: Biotin synthase (332 aa).

Residues 53–282 (YFGKKVKLNM…TKEIRISGGR (230 aa)) enclose the Radical SAM core domain. Residues Cys71, Cys75, and Cys78 each coordinate [4Fe-4S] cluster. [2Fe-2S] cluster is bound by residues Cys115, Cys147, Cys207, and Arg277.

The protein belongs to the radical SAM superfamily. Biotin synthase family. In terms of assembly, homodimer. The cofactor is [4Fe-4S] cluster. [2Fe-2S] cluster serves as cofactor.

It carries out the reaction (4R,5S)-dethiobiotin + (sulfur carrier)-SH + 2 reduced [2Fe-2S]-[ferredoxin] + 2 S-adenosyl-L-methionine = (sulfur carrier)-H + biotin + 2 5'-deoxyadenosine + 2 L-methionine + 2 oxidized [2Fe-2S]-[ferredoxin]. The protein operates within cofactor biosynthesis; biotin biosynthesis; biotin from 7,8-diaminononanoate: step 2/2. In terms of biological role, catalyzes the conversion of dethiobiotin (DTB) to biotin by the insertion of a sulfur atom into dethiobiotin via a radical-based mechanism. The chain is Biotin synthase from Bacillus thuringiensis (strain Al Hakam).